We begin with the raw amino-acid sequence, 265 residues long: tRNA pseudouridine synthase A (265 aa).

The active-site Nucleophile is the Asp53. Tyr111 lines the substrate pocket.

The protein belongs to the tRNA pseudouridine synthase TruA family. Homodimer.

It catalyses the reaction uridine(38/39/40) in tRNA = pseudouridine(38/39/40) in tRNA. Functionally, formation of pseudouridine at positions 38, 39 and 40 in the anticodon stem and loop of transfer RNAs. The polypeptide is tRNA pseudouridine synthase A (Acinetobacter baumannii (strain ATCC 17978 / DSM 105126 / CIP 53.77 / LMG 1025 / NCDC KC755 / 5377)).